A 749-amino-acid chain; its full sequence is Transcription factor RFX3 (749 aa).

Residues 183–258 constitute a DNA-binding region (RFX-type winged-helix); that stretch reads HLQWLLDNYE…YHYYGIRVKP (76 aa). Residues 663–699 form a disordered region; sequence VSPGNLDKDEGSEVESEMDEELDDSSEPQAKREKTEL. Residues 674 to 688 are compositionally biased toward acidic residues; that stretch reads SEVESEMDEELDDSS.

This sequence belongs to the RFX family. Heterodimer; heterodimerizes with RFX1 and RFX2, and RFX6.

The protein localises to the nucleus. Functionally, transcription factor required for ciliogenesis and islet cell differentiation during endocrine pancreas development. Essential for the differentiation of nodal monocilia and left-right asymmetry specification during embryogenesis. Required for the biogenesis of motile cilia by governing growth and beating efficiency of motile cells. Also required for ciliated ependymal cell differentiation. Regulates the expression of genes involved in ciliary assembly (DYNC2LI1, FOXJ1 and BBS4) and genes involved in ciliary motility (DNAH11, DNAH9 and DNAH5). Together with RFX6, participates in the differentiation of 4 of the 5 islet cell types during endocrine pancreas development, with the exception of pancreatic PP (polypeptide-producing) cells. Regulates transcription by forming a heterodimer with another RFX protein and binding to the X-box in the promoter of target genes. Represses transcription of MAP1A in non-neuronal cells but not in neuronal cells. The sequence is that of Transcription factor RFX3 (RFX3) from Homo sapiens (Human).